A 186-amino-acid chain; its full sequence is Biphenyl dioxygenase subunit beta (186 aa).

The protein belongs to the bacterial ring-hydroxylating dioxygenase beta subunit family. In terms of assembly, heterohexamer consisting of 3 BphA subunits and 3 BphE subunits. A ferredoxin (BphF) and a ferredoxin reductase (BphG) must be present to obtain activity.

The catalysed reaction is biphenyl + NADH + O2 + H(+) = (2R,3S)-3-phenylcyclohexa-3,5-diene-1,2-diol + NAD(+). It participates in xenobiotic degradation; biphenyl degradation; 2-hydroxy-2,4-pentadienoate and benzoate from biphenyl: step 1/4. Its function is as follows. The beta subunit may be responsible for the substrate specificity of the enzyme. In Comamonas testosteroni (Pseudomonas testosteroni), this protein is Biphenyl dioxygenase subunit beta (bphE).